Reading from the N-terminus, the 370-residue chain is 3-isopropylmalate dehydrogenase (370 aa).

77 to 90 provides a ligand contact to NAD(+); it reads GPKWDSVPYEVRPE. Substrate-binding residues include Arg-97, Arg-107, Arg-135, and Asp-226. Mg(2+) is bound by residues Asp-226, Asp-250, and Asp-254. An NAD(+)-binding site is contributed by 290–302; the sequence is GSAPDIAGKGIAN.

Belongs to the isocitrate and isopropylmalate dehydrogenases family. LeuB type 1 subfamily. In terms of assembly, homodimer. It depends on Mg(2+) as a cofactor. Requires Mn(2+) as cofactor.

Its subcellular location is the cytoplasm. The catalysed reaction is (2R,3S)-3-isopropylmalate + NAD(+) = 4-methyl-2-oxopentanoate + CO2 + NADH. It functions in the pathway amino-acid biosynthesis; L-leucine biosynthesis; L-leucine from 3-methyl-2-oxobutanoate: step 3/4. Catalyzes the oxidation of 3-carboxy-2-hydroxy-4-methylpentanoate (3-isopropylmalate) to 3-carboxy-4-methyl-2-oxopentanoate. The product decarboxylates to 4-methyl-2 oxopentanoate. This is 3-isopropylmalate dehydrogenase from Rhizobium johnstonii (strain DSM 114642 / LMG 32736 / 3841) (Rhizobium leguminosarum bv. viciae).